The following is a 446-amino-acid chain: MSLRLSSGSRRSYARPSTGSLRGASFGAGNACGVAGIGSGFSCAFGGSSTGGNTGVANSCAGFTVNEGGLLSGNEKVTMQNLNDRLASYLDNVQALQEANADLEQKIKGWYEKFGPGSCRGLDHDYSRYFPIIDDLKNQIITSTTSNANAVLQIDNARLTADDFRLKYENELALHQSVEADVNGLRRVLDEITLCRTDLEIQYETLSEELTYLKKNHKEEMQALQCAAGGNVNVEMNAAPGVDLTVLLNNMRAEYEALAEQNRRDAEAWFQEKSASLQQQITEDVGATTSARNELTEMKRTLQTLEIELQSLLATKHSLECSLTETEGNYCTQLAQIQAQISALEEQLHQVRTETEGQKLEYEQLLNVKAHLEKEIETYCLLIGGDEGACKSSSYKSKDYGSGNAGNQIKDPVKAIVVKKVLEEVDQRSKILTTRLHSLEEKSQSN.

The segment at 1-74 (MSLRLSSGSR…VNEGGLLSGN (74 aa)) is head. Residues 75-110 (EKVTMQNLNDRLASYLDNVQALQEANADLEQKIKGW) form a coil 1A region. One can recognise an IF rod domain in the interval 75 to 390 (EKVTMQNLND…LLIGGDEGAC (316 aa)). The segment at 111 to 132 (YEKFGPGSCRGLDHDYSRYFPI) is linker 1. Positions 133–224 (IDDLKNQIIT…KNHKEEMQAL (92 aa)) are coil 1B. A linker 12 region spans residues 225–247 (QCAAGGNVNVEMNAAPGVDLTVL). The tract at residues 248–386 (LNNMRAEYEA…ETYCLLIGGD (139 aa)) is coil 2. The tract at residues 387–446 (EGACKSSSYKSKDYGSGNAGNQIKDPVKAIVVKKVLEEVDQRSKILTTRLHSLEEKSQSN) is tail. Residue Ser-438 is modified to Phosphoserine.

This sequence belongs to the intermediate filament family. In terms of assembly, heterodimer of a type I and a type II keratin. Heterodimer with type II keratin KRT5 leading to the formation of keratin intermediate filament (KIF) network. Interacts with KRT6A to form filaments.

Its subcellular location is the cytoplasm. Essential for the proper assembly of type I and type II keratin protein complexes and formation of keratin intermediate filaments in the inner root sheath (irs). Plays a role in the cytoskeleton organization. The protein is Keratin, type I cytoskeletal 25 of Mus musculus (Mouse).